Here is a 181-residue protein sequence, read N- to C-terminus: TATA-box-binding protein (181 aa).

A run of 2 repeats spans residues 7–83 (IVNV…IKEL) and 98–173 (VQNM…LTTL).

This sequence belongs to the TBP family.

In terms of biological role, general factor that plays a role in the activation of archaeal genes transcribed by RNA polymerase. Binds specifically to the TATA box promoter element which lies close to the position of transcription initiation. This chain is TATA-box-binding protein, found in Methanococcus maripaludis (strain C7 / ATCC BAA-1331).